Here is a 1992-residue protein sequence, read N- to C-terminus: MSNRPNNNPGGSLRRSQRNTAGAQPQDDSIGGRSCSSSSAVIVPQPEDPDRANTSERQKTGQVPKKDNSRGVKRSASPDYNRTNSPSSAKKPKALQHTESPSETNKPHSKSKKRHLDQEQQLKSAQSPSTSKAHTRKSGATGGSRSQKRKRTESSCVKSGSGSESTGAEERSAKPTKLASKSATSAKAGCSTITDSSSAASTSSSSSAVASASSTVPPGARVKQGKDQNKARRSRSASSPSPRRSSREKEQSKTGGSSKFDWAARFSPKVSLPKTKLSLPGSSKSETSKPGPSGLQAKLASLRKSTKKRSESPPAELPSLRRSTRQKTTGSCASTSRRGSGLGKRGAAEARRQEKMADPESNQEAVNSSAARTDEAPQGAAGAVGMTTSGESESDDSEMGRLQALLEARGLPPHLFGPLGPRMSQLFHRTIGSGASSKAQQLLQGLQASDESQQLQAVIEMCQLLVMGNEETLGGFPVKSVVPALITLLQMEHNFDIMNHACRALTYMMEALPRSSAVVVDAIPVFLEKLQVIQCIDVAEQALTALEMLSRRHSKAILQAGGLADCLLYLEFFSINAQRNALAIAANCCQSITPDEFHFVADSLPLLTQRLTHQDKKSVESTCLCFARLVDNFQHEENLLQQVASKDLLTNVQQLLVVTPPILSSGMFIMVVRMFSLMCSNCPTLAVQLMKQNIAETLHFLLCGASNGSCQEQIDLVPRSPQELYELTSLICELMPCLPKEGIFAVDTMLKKGNAQNTDGAIWQWRDDRGLWHPYNRIDSRIIEQINEDTGTARAIQRKPNPLANSNTSGYSESKKDDARAQLMKEDPELAKSFIKTLFGVLYEVYSSSAGPAVRHKCLRAILRIIYFADAELLKDVLKNHAVSSHIASMLSSQDLKIVVGALQMAEILMQKLPDIFSVYFRREGVMHQVKHLAESESLLTSPPKACTNGSGSMGSTTSVSSGTATAATHAAADLGSPSLQHSRDDSLDLSPQGRLSDVLKRKRLPKRGPRRPKYSPPRDDDKVDNQAKSPTTTQSPKSSFLASLNPKTWGRLSTQSNSNNIEPARTAGGSGLARAASKDTISNNREKIKGWIKEQAHKFVERYFSSENMDGSNPALNVLQRLCAATEQLNLQVDGGAECLVEIRSIVSESDVSSFEIQHSGFVKQLLLYLTSKSEKDAVSREIRLKRFLHVFFSSPLPGEEPIGRVEPVGNAPLLALVHKMNNCLSQMEQFPVKVHDFPSGNGTGGSFSLNRGSQALKFFNTHQLKCQLQRHPDCANVKQWKGGPVKIDPLALVQAIERYLVVRGYGRVREDDEDSDDDGSDEEIDESLAAQFLNSGNVRHRLQFYIGEHLLPYNMTVYQAVRQFSIQAEDERESTDDESNPLGRAGIWTKTHTIWYKPVREDEESNKDCVGGKRGRAQTAPTKTSPRNAKKHDELWHDGVCPSVSNPLEVYLIPTPPENITFEDPSLDVILLLRVLHAISRYWYYLYDNAMCKEIIPTSEFINSKLTAKANRQLQDPLVIMTGNIPTWLTELGKTCPFFFPFDTRQMLFYVTAFDRDRAMQRLLDTNPEINQSDSQDSRVAPRLDRKKRTVNREELLKQAESVMQDLGSSRAMLEIQYENEVGTGLGPTLEFYALVSQELQRADLGLWRGEEVTLSNPKGSQEGTKYIQNLQGLFALPFGRTAKPAHIAKVKMKFRFLGKLMAKAIMDFRLVDLPLGLPFYKWMLRQETSLTSHDLFDIDPVVARSVYHLEDIVRQKKRLEQDKSQTKESLQYALETLTMNGCSVEDLGLDFTLPGFPNIELKKGGKDIPVTIHNLEEYLRLVIFWALNEGVSRQFDSFRDGFESVFPLSHLQYFYPEELDQLLCGSKADTWDAKTLMECCRPDHGYTHDSRAVKFLFEILSSFDNEQQRLFLQFVTGSPRLPVGGFRSLNPPLTIVRKTFESTENPDDFLPSVMTCVNYLKLPDYSSIEIMREKLLIAAREGQQSFHLS.

Residues 1-10 (MSNRPNNNPG) are compositionally biased toward polar residues. Disordered stretches follow at residues 1 to 398 (MSNR…DDSE), 797 to 817 (QRKP…SKKD), and 938 to 1080 (SLLT…ASKD). The residue at position 2 (Ser-2) is an N-acetylserine. Position 12 is a phosphoserine (Ser-12). Positions 18–27 (RNTAGAQPQD) are enriched in polar residues. Basic and acidic residues predominate over residues 48–70 (DPDRANTSERQKTGQVPKKDNSR). A phosphoserine mark is found at Ser-77, Ser-85, and Ser-100. Residues 78-88 (PDYNRTNSPSS) show a composition bias toward polar residues. The segment covering 119–132 (EQQLKSAQSPSTSK) has biased composition (polar residues). Low complexity-rich tracts occupy residues 154–166 (SSCV…SEST) and 175–216 (PTKL…SSTV). The residue at position 181 (Lys-181) is an N6-acetyllysine. Positions 280-290 (PGSSKSETSKP) are enriched in polar residues. 2 positions are modified to phosphoserine: Ser-310 and Ser-312. A compositionally biased stretch (polar residues) spans 326–338 (QKTTGSCASTSRR). Over residues 346–358 (GAAEARRQEKMAD) the composition is skewed to basic and acidic residues. 2 stretches are compositionally biased toward polar residues: residues 360-371 (ESNQEAVNSSAA) and 803-812 (LANSNTSGYS). In terms of domain architecture, WWE spans 749–836 (MLKKGNAQNT…DPELAKSFIK (88 aa)). Ser-942 is modified (phosphoserine). The segment covering 948–973 (TNGSGSMGSTTSVSSGTATAATHAAA) has biased composition (low complexity). 2 positions are modified to phosphoserine: Ser-991 and Ser-997. The segment covering 1001-1014 (KRKRLPKRGPRRPK) has biased composition (basic residues). At Ser-1016 the chain carries Phosphoserine. Over residues 1017-1026 (PPRDDDKVDN) the composition is skewed to basic and acidic residues. Residues 1029-1040 (KSPTTTQSPKSS) are compositionally biased toward low complexity. The residue at position 1030 (Ser-1030) is a Phosphoserine. The segment covering 1041 to 1062 (FLASLNPKTWGRLSTQSNSNNI) has biased composition (polar residues). Ser-1317, Ser-1322, Ser-1329, and Ser-1376 each carry phosphoserine. The residue at position 1377 (Thr-1377) is a Phosphothreonine. 2 disordered regions span residues 1407–1433 (SNKD…NAKK) and 1568–1587 (TNPE…PRLD). The residue at position 1425 (Lys-1425) is an N6-acetyllysine. At Ser-1427 the chain carries Phosphoserine. The K-box stretch occupies residues 1496-1570 (EIIPTSEFIN…AMQRLLDTNP (75 aa)). One can recognise an HECT domain in the interval 1885–1992 (PDHGYTHDSR…REGQQSFHLS (108 aa)). Cys-1959 serves as the catalytic Glycyl thioester intermediate.

This sequence belongs to the UPL family. K-HECT subfamily. As to quaternary structure, interacts with MYC; leading to disrupt interaction with isoform p19ARF/ARF of CDKN2A. Interacts with TRADD; leading to disrupt interaction with isoform p19ARF/ARF of CDKN2A. Interacts with SMARCC1; leading to disrupt interaction with SMARCE1.

It localises to the nucleus. Its subcellular location is the nucleoplasm. It catalyses the reaction S-ubiquitinyl-[E2 ubiquitin-conjugating enzyme]-L-cysteine + [acceptor protein]-L-lysine = [E2 ubiquitin-conjugating enzyme]-L-cysteine + N(6)-ubiquitinyl-[acceptor protein]-L-lysine.. The protein operates within protein modification; protein ubiquitination. In terms of biological role, E3 ubiquitin-protein ligase involved in ubiquitin fusion degradation (UFD) pathway and regulation of DNA repair. Part of the ubiquitin fusion degradation (UFD) pathway, a process that mediates ubiquitination of protein at their N-terminus, regardless of the presence of lysine residues in target proteins. Acts as a key regulator of DNA damage response by acting as a suppressor of RNF168, an E3 ubiquitin-protein ligase that promotes accumulation of 'Lys-63'-linked histone H2A and H2AX at DNA damage sites, thereby acting as a guard against excessive spreading of ubiquitinated chromatin at damaged chromosomes. In normal cells, mediates ubiquitination and degradation of isoform p19ARF/ARF of CDKN2A, a lysine-less tumor suppressor required for p53/TP53 activation under oncogenic stress. In cancer cells, however, isoform p19ARF/ARF and TRIP12 are located in different cell compartments, preventing isoform p19ARF/ARF ubiquitination and degradation. Does not mediate ubiquitination of isoform p16-INK4a of CDKN2A. Also catalyzes ubiquitination of NAE1 and SMARCE1, leading to their degradation. Ubiquitination and degradation of target proteins is regulated by interaction with proteins such as MYC, TRADD or SMARCC1, which disrupt the interaction between TRIP12 and target proteins. Mediates ubiquitination of ASXL1: following binding to N(6)-methyladenosine methylated DNA, ASXL1 is ubiquitinated by TRIP12, leading to its degradation and subsequent inactivation of the PR-DUB complex. The protein is E3 ubiquitin-protein ligase TRIP12 (TRIP12) of Homo sapiens (Human).